We begin with the raw amino-acid sequence, 440 residues long: Transposon Ty1-PR3 Gag polyprotein (440 aa).

3 stretches are compositionally biased toward polar residues: residues 1–23, 48–60, and 127–152; these read MESQ…SVTS, TKAN…TPAS, and QSQF…GNTF. 3 disordered regions span residues 1–93, 126–173, and 352–440; these read MESQ…MMTQ, PQSQ…RPPP, and GSRN…PGTY. Residues 153–165 show a composition bias toward low complexity; it reads TDSSSADSDMTST. The segment at 299–401 is RNA-binding; that stretch reads NNGIHINNKV…NSKSKTARAH (103 aa). Residues 402 to 418 show a composition bias toward low complexity; sequence NVSTSNNSPSTDNDSIS. A Phosphoserine modification is found at S416. Over residues 419–428 the composition is skewed to polar residues; sequence KSTTEPIQLN. The segment covering 429-440 has biased composition (basic and acidic residues); sequence NKHDLHLRPGTY.

Homotrimer.

It localises to the cytoplasm. Functionally, capsid protein (CA) is the structural component of the virus-like particle (VLP), forming the shell that encapsulates the retrotransposons dimeric RNA genome. The particles are assembled from trimer-clustered units and there are holes in the capsid shells that allow for the diffusion of macromolecules. CA also has nucleocapsid-like chaperone activity, promoting primer tRNA(i)-Met annealing to the multipartite primer-binding site (PBS), dimerization of Ty1 RNA and initiation of reverse transcription. This is Transposon Ty1-PR3 Gag polyprotein (TY1A-PR3) from Saccharomyces cerevisiae (strain ATCC 204508 / S288c) (Baker's yeast).